The following is a 341-amino-acid chain: Phosphate acyltransferase (341 aa).

It belongs to the PlsX family. As to quaternary structure, homodimer. Probably interacts with PlsY.

Its subcellular location is the cytoplasm. It carries out the reaction a fatty acyl-[ACP] + phosphate = an acyl phosphate + holo-[ACP]. It functions in the pathway lipid metabolism; phospholipid metabolism. Catalyzes the reversible formation of acyl-phosphate (acyl-PO(4)) from acyl-[acyl-carrier-protein] (acyl-ACP). This enzyme utilizes acyl-ACP as fatty acyl donor, but not acyl-CoA. The chain is Phosphate acyltransferase from Nostoc sp. (strain PCC 7120 / SAG 25.82 / UTEX 2576).